A 423-amino-acid polypeptide reads, in one-letter code: Type II methyltransferase M.NgoBV (423 aa).

One can recognise an SAM-dependent MTase C5-type domain in the interval 4–423 (IKFIDLFSGM…AVSERLLHTL (420 aa)). The active site involves C80.

It belongs to the class I-like SAM-binding methyltransferase superfamily. C5-methyltransferase family.

It carries out the reaction a 2'-deoxycytidine in DNA + S-adenosyl-L-methionine = a 5-methyl-2'-deoxycytidine in DNA + S-adenosyl-L-homocysteine + H(+). Its function is as follows. A methylase, recognizes the double-stranded sequence 5'-GGNNCC-3', methylates C-5 on both strands, and protects the DNA from cleavage by the NgoBV endonuclease. This Neisseria gonorrhoeae protein is Type II methyltransferase M.NgoBV (ngoBVM).